The chain runs to 85 residues: Putative sodium channel toxin Ts34 (85 aa).

The first 17 residues, 1–17 (MNLPLLLLITILIEIHA), serve as a signal peptide directing secretion. In terms of domain architecture, LCN-type CS-alpha/beta spans 19–82 (KDGYVIYKNS…IYGETGSYCW (64 aa)). Cystine bridges form between Cys-30/Cys-81, Cys-34/Cys-57, Cys-43/Cys-62, and Cys-47/Cys-64.

Belongs to the long (4 C-C) scorpion toxin superfamily. Sodium channel inhibitor family. Expressed by the venom gland.

Its subcellular location is the secreted. Putative sodium channel toxin. The protein is Putative sodium channel toxin Ts34 of Tityus serrulatus (Brazilian scorpion).